The following is a 497-amino-acid chain: Cytochrome P450 71A20 (497 aa).

Residues 3–23 (MILITLCLTTLLALLLKSILK) traverse the membrane as a helical segment. Residue cysteine 440 participates in heme binding.

This sequence belongs to the cytochrome P450 family. Requires heme as cofactor.

The protein localises to the membrane. This is Cytochrome P450 71A20 (CYP71A20) from Arabidopsis thaliana (Mouse-ear cress).